The primary structure comprises 401 residues: MHIKTLTVSQLNRYVKNTLDADFILNNASVKGEISNLKIHSSGHIYFSLKDGGSKINCVMFKSYAYNLKFAPENGMDVVALGNVSVYEKEGSYQLYVKDMKREGIGDLYVAFEKLKEKLKEEGLFDDVHKKEIPKFSKKVGVITSPTGAALKDIINVTKRRNKGIELLIYPALVQGTDASRTLIEGIKILNKVEDVDIIILARGGGSIEELWAFNNEELAYAVYNSKKPIITGVGHETDFTIVDFVSDRRAPTPSAAAEIAVFDREVLINEILNYKYNIKNYMENIIKEKRNYLNLYKQKIEANSPTNIIVNEYKNIDNLKELLNMKIEGKLNKEKNNLSRLSSLLEAHNPLNVLKKGYTLIEDEGNNLITEKEALKELNKINIIFKDGRAKLSIEYIEEF.

Belongs to the XseA family. Heterooligomer composed of large and small subunits.

Its subcellular location is the cytoplasm. It carries out the reaction Exonucleolytic cleavage in either 5'- to 3'- or 3'- to 5'-direction to yield nucleoside 5'-phosphates.. Functionally, bidirectionally degrades single-stranded DNA into large acid-insoluble oligonucleotides, which are then degraded further into small acid-soluble oligonucleotides. The polypeptide is Exodeoxyribonuclease 7 large subunit (Clostridium botulinum (strain Hall / ATCC 3502 / NCTC 13319 / Type A)).